Here is a 298-residue protein sequence, read N- to C-terminus: GTP cyclohydrolase FolE2 (298 aa).

Belongs to the GTP cyclohydrolase IV family.

The enzyme catalyses GTP + H2O = 7,8-dihydroneopterin 3'-triphosphate + formate + H(+). It participates in cofactor biosynthesis; 7,8-dihydroneopterin triphosphate biosynthesis; 7,8-dihydroneopterin triphosphate from GTP: step 1/1. Its function is as follows. Converts GTP to 7,8-dihydroneopterin triphosphate. This is GTP cyclohydrolase FolE2 from Pseudomonas aeruginosa (strain UCBPP-PA14).